The primary structure comprises 792 residues: Terminal nucleotidyltransferase 4A (792 aa).

The disordered stretch occupies residues 55–191; the sequence is GAAGRGSGGL…QFHPGRRKRE (137 aa). 2 stretches are compositionally biased toward low complexity: residues 80–97 and 105–139; these read APAA…PAAE and SPSL…ASLG. Mg(2+)-binding residues include Asp-297 and Asp-299. ATP is bound by residues Gly-360, Lys-385, Ser-403, and Tyr-404. The PAP-associated domain maps to 428–486; the sequence is NLGMLLVEFFELYGRNFNYLKTGIRIKEGGAYIAKEEIMKAMTSGYRPSMLCIEDPLLP. Residues Asn-488 and Arg-492 each contribute to the ATP site. The span at 601–619 shows a compositional bias: low complexity; that stretch reads QLLSSGSSASSVSSLSGSD. 2 disordered regions span residues 601–632 and 737–792; these read QLLS…TPSV and MKGS…SLSR. Over residues 744–756 the composition is skewed to gly residues; the sequence is TQGGGYSSVGSGG. Residues 764–781 are compositionally biased toward basic residues; that stretch reads RGHHQYNRTGWRRKKHTH.

It belongs to the DNA polymerase type-B-like family. Component of a nuclear TRAMP-like complex, an ATP-dependent exosome regulatory complex consisting of a helicase (MTREX), an oligadenylate polymerase (TENT4B or TENT4A), and a substrate specific RNA-binding factor (ZCCHC7 or ZCCHC8). Several TRAMP-like complexes exist with specific compositions and are associated with nuclear, or nucleolar RNA exosomes. Mg(2+) serves as cofactor. Requires Mn(2+) as cofactor.

The protein resides in the cytoplasm. The protein localises to the nucleus. It localises to the nucleoplasm. It carries out the reaction RNA(n) + ATP = RNA(n)-3'-adenine ribonucleotide + diphosphate. In terms of biological role, terminal nucleotidyltransferase that catalyzes preferentially the transfer of ATP and GTP on RNA 3' poly(A) tail creating a heterogeneous 3' poly(A) tail leading to mRNAs stabilization by protecting mRNAs from active deadenylation. Also functions as a catalytic subunit of a TRAMP-like complex which has a poly(A) RNA polymerase activity and is involved in a post-transcriptional quality control mechanism. Polyadenylation with short oligo(A) tails is required for the degradative activity of the exosome on several of its nuclear RNA substrates. Has no terminal uridylyltransferase activity, and does not play a role in replication-dependent histone mRNA degradation via uridylation. This chain is Terminal nucleotidyltransferase 4A, found in Homo sapiens (Human).